The primary structure comprises 1989 residues: Zinc finger C3H1 domain-containing protein (1989 aa).

Disordered stretches follow at residues 1–133 (MATA…RPSF), 148–218 (GRPY…SKNE), 251–290 (SSKE…PEEK), and 310–365 (LPGD…LGED). Residue alanine 2 is modified to N-acetylalanine. A phosphoserine mark is found at serine 15, serine 28, and serine 34. The span at 20 to 32 (GELEDGEISDDDN) shows a compositional bias: acidic residues. Positions 33–44 (NSQIRSRSSSSS) are enriched in low complexity. Residues 62-72 (RGGGSGGGGGS) are compositionally biased toward gly residues. 3 stretches are compositionally biased toward low complexity: residues 114-132 (PPSV…PRPS), 183-192 (GFSSSQSWRE), and 201-210 (KSFGRSPSRK). Serine 128 is modified (phosphoserine). Positions 219–259 (NCVEETFEDLLLKYKQIQLELECINKDEKLALSSKEENVQE) form a coiled coil. Phosphoserine is present on serine 251. Residues 251–262 (SSKEENVQEDPK) show a composition bias toward basic and acidic residues. Polar residues predominate over residues 266-279 (FEDQTSTDNVSITK). Positions 280 to 290 (DSSKEVAPEEK) are enriched in basic and acidic residues. The segment covering 330 to 340 (KSDTTDSSQGL) has biased composition (polar residues). Serine 352 and serine 383 each carry phosphoserine. Residues 358–389 (SEKKLGEDEEELSELQLRLLALQSASKKWQQK) are a coiled coil. Disordered regions lie at residues 385–671 (KWQQ…SNLS) and 711–770 (LNDS…PEAL). Residues 392–402 (QVMKESKEKLT) are compositionally biased toward basic and acidic residues. Basic residues predominate over residues 430-440 (ALRKQQTKAWK). The stretch at 432–487 (RKQQTKAWKKLQQQKEQERQKEEDQRKQAEEEERRKREEEIRKIRDLSNQEEQYNR) forms a coiled coil. Basic and acidic residues-rich tracts occupy residues 444–479 (QQKE…RDLS) and 501–515 (KSSD…DKQP). Acidic residues predominate over residues 527-537 (NYEEVAMDTDS). Residues 574–583 (VSSLPPLSQP) are compositionally biased toward low complexity. Residues 594 to 616 (PLPPLPPLPPLPPEDPEQPPKPP) are compositionally biased toward pro residues. Residues 647–671 (TSSNSDPPSPPVLNNSHPVPRSNLS) are compositionally biased toward polar residues. Phosphoserine is present on residues serine 662, serine 714, serine 717, and serine 719. The span at 755–770 (PKSEKENDPLRTPEAL) shows a compositional bias: basic and acidic residues. Threonine 766 is subject to Phosphothreonine. Residues serine 805 and serine 809 each carry the phosphoserine modification. Positions 847–909 (LKNLVQQEAK…QQRVTIKKAL (63 aa)) form a coiled coil. Residues serine 948, serine 949, and serine 953 each carry the phosphoserine modification. Positions 965 to 989 (EKRRLQKLEYEYALKIQKLKEARAL) form a coiled coil. 2 positions are modified to phosphoserine: serine 998 and serine 1046. A C3H1-type zinc finger spans residues 1185–1206 (FCRFDLTGTCNDDDCQWQHIQD). Phosphoserine occurs at positions 1301, 1303, and 1304. 7 TPR repeats span residues 1361–1400 (VQLW…NKDN), 1401–1434 (PEIW…APDY), 1438–1471 (WTFL…ETSN), 1478–1511 (LEAL…ANDG), 1602–1635 (LPLY…CPIN), 1636–1669 (CQLL…NPQN), and 1745–1778 (PYLW…AMRC).

In terms of assembly, component of the poly(A) tail exosome targeting (PAXT) complex made of accessory factors, such as PABPN1, ZFC3H1 and MTREX, and which directs a subset of long and polyadenylated poly(A) RNAs for exosomal degradation. Co-localizes with component of the CBC-ARS2 (CBCA) complex. Binds to RNA exosome components. Interacts with NCBP1/CBP80, ZC3H18, MTREX and PABPN1 in a RNase-insensitive manner, and with PABPC4, PABPC1 and ZC3H14 in a RNase-sensitive manner.

The protein resides in the nucleus. Functionally, subunit of the trimeric poly(A) tail exosome targeting (PAXT) complex, a complex that directs a subset of long and polyadenylated poly(A) RNAs for exosomal degradation. The RNA exosome is fundamental for the degradation of RNA in eukaryotic nuclei. Substrate targeting is facilitated by its cofactor MTREX, which links to RNA-binding protein adapters. The sequence is that of Zinc finger C3H1 domain-containing protein (ZFC3H1) from Homo sapiens (Human).